Reading from the N-terminus, the 217-residue chain is 3,4-dihydroxy-2-butanone 4-phosphate synthase (217 aa).

Residues Arg-37–Glu-38, Asp-42, Arg-150–Thr-154, and Glu-174 each bind D-ribulose 5-phosphate. Residue Glu-38 coordinates Mg(2+). His-153 provides a ligand contact to Mg(2+).

The protein belongs to the DHBP synthase family. As to quaternary structure, homodimer. Mg(2+) is required as a cofactor. Mn(2+) serves as cofactor.

It catalyses the reaction D-ribulose 5-phosphate = (2S)-2-hydroxy-3-oxobutyl phosphate + formate + H(+). It participates in cofactor biosynthesis; riboflavin biosynthesis; 2-hydroxy-3-oxobutyl phosphate from D-ribulose 5-phosphate: step 1/1. Its function is as follows. Catalyzes the conversion of D-ribulose 5-phosphate to formate and 3,4-dihydroxy-2-butanone 4-phosphate. The sequence is that of 3,4-dihydroxy-2-butanone 4-phosphate synthase from Sodalis glossinidius (strain morsitans).